The primary structure comprises 337 residues: MVQGLKLGLKASAEQFGPRDLVELGVMAEEHGLDSVTVSDHFQPWRHNGGHAPFSIAWMTAVGERTQRLQLGTSVMTPTFRYNPAVVAQAFATMGCLYPGRVMLGVGTGEALNEIATGFKGEWPEFKERFARLRESVQLMRDLWTGDRVDFEGEYYSTKGASIYDVPEGGIPVYIAAGGPVVARYAGRAGEGFICTSGKGMDLYTEKLIPAVKEGAEKAARNFADIDRMIEIKISYDTDPAAALENTRFWAPLSLTAEQKHSIDDPIEMEAAADALPIEQVAKRWIVSSDPDEAVEMIKPYLDAGLNHLVFHAPGHDQKRFLDLFERDLAPRLRALA.

Position 40 (aspartate 40) interacts with coenzyme F420-(gamma-Glu)n. Histidine 41 functions as the Proton donor in the catalytic mechanism. Coenzyme F420-(gamma-Glu)n contacts are provided by residues threonine 77 and threonine 108–glycine 109. Glutamate 110 acts as the Proton acceptor in catalysis. Coenzyme F420-(gamma-Glu)n contacts are provided by residues asparagine 113, glycine 178–glycine 179, and valine 181–valine 182. 4 residues coordinate substrate: threonine 196, lysine 199, lysine 260, and arginine 284.

The protein belongs to the F420-dependent glucose-6-phosphate dehydrogenase family. In terms of assembly, homodimer.

The enzyme catalyses oxidized coenzyme F420-(gamma-L-Glu)(n) + D-glucose 6-phosphate + H(+) = 6-phospho-D-glucono-1,5-lactone + reduced coenzyme F420-(gamma-L-Glu)(n). Functionally, catalyzes the coenzyme F420-dependent oxidation of glucose 6-phosphate (G6P) to 6-phosphogluconolactone. The sequence is that of F420-dependent glucose-6-phosphate dehydrogenase from Rhodococcus hoagii (strain 103S) (Rhodococcus equi).